A 1285-amino-acid polypeptide reads, in one-letter code: Nuclear pore complex protein NUP133 (1285 aa).

Disordered stretches follow at residues Met1–Trp53 and Glu522–Arg580. The span at Thr31 to Ile41 shows a compositional bias: polar residues. Basic and acidic residues-rich tracts occupy residues Pro523–Arg544 and Thr553–Asn569.

This sequence belongs to the nucleoporin Nup133 family. In terms of assembly, part of the nuclear pore complex (NPC). The NPC has an eight-fold symmetrical structure comprising a central transport channel and two rings, the cytoplasmic and nuclear rings, to which eight filaments are attached. The cytoplasmic filaments have loose ends, while the nuclear filaments are joined in a distal ring, forming a nuclear basket. NPCs are highly dynamic in configuration and composition, and can be devided in 3 subcomplexes, the NUP62 subcomplex, the NUP107-160 subcomplex and the NUP93 subcomplex, containing approximately 30 different nucleoporin proteins.

It is found in the nucleus envelope. Its subcellular location is the nucleus. It localises to the nuclear pore complex. This chain is Nuclear pore complex protein NUP133, found in Arabidopsis thaliana (Mouse-ear cress).